The following is a 212-amino-acid chain: Secreted and transmembrane protein 1b (212 aa).

The first 28 residues, 1–28 (MLAYSVTSSGLFPRMLWALLLLAASLNA), serve as a signal peptide directing secretion. Residues 29 to 160 (HNDVWDEPCC…DKPPTAVRTE (132 aa)) are Extracellular-facing. Cys38 and Cys55 are disulfide-bonded. N-linked (GlcNAc...) asparagine glycosylation is found at Asn56, Asn85, Asn114, and Asn130. Residues 161–181 (VIIIIAIATTIIITGIGVFVW) traverse the membrane as a helical segment. At 182–212 (YKQFPVAPQIQMSVPCLIHGSPGIPYLTLPP) the chain is on the cytoplasmic side.

This sequence belongs to the SECTM family. In terms of assembly, interacts with CD7.

The protein resides in the cell membrane. It is found in the secreted. Functionally, may be involved in thymocyte signaling. This is Secreted and transmembrane protein 1b (Sectm1b) from Mus musculus (Mouse).